The sequence spans 260 residues: UPF0294 protein YPO1077/y3099/YP_2772 (260 aa).

The protein belongs to the UPF0294 family.

The protein localises to the cytoplasm. This is UPF0294 protein YPO1077/y3099/YP_2772 from Yersinia pestis.